A 156-amino-acid polypeptide reads, in one-letter code: Ribosome maturation factor RimP (156 aa).

It belongs to the RimP family.

The protein localises to the cytoplasm. In terms of biological role, required for maturation of 30S ribosomal subunits. The chain is Ribosome maturation factor RimP from Bacillus subtilis (strain 168).